The following is a 176-amino-acid chain: Large ribosomal subunit protein uL10 (176 aa).

The protein belongs to the universal ribosomal protein uL10 family. Part of the ribosomal stalk of the 50S ribosomal subunit. The N-terminus interacts with L11 and the large rRNA to form the base of the stalk. The C-terminus forms an elongated spine to which L12 dimers bind in a sequential fashion forming a multimeric L10(L12)X complex.

Forms part of the ribosomal stalk, playing a central role in the interaction of the ribosome with GTP-bound translation factors. This Saccharophagus degradans (strain 2-40 / ATCC 43961 / DSM 17024) protein is Large ribosomal subunit protein uL10.